The sequence spans 174 residues: MAIILGIDPGSRLTGYGVVAHQGSKFTYLGSGCIKLADHEFHIRLKMIYQGITQLIEQFSPETFAIEKVFMAHNPDSALKLGQARGAAIVGAAMADLPVFEYSARQIKQAVVGNGGADKTQVQHMVKNILKLPGTPQADAADALAIAICHAHSEQNLIKLAGSASKTVRGRLRK.

Catalysis depends on residues Asp8, Glu67, and Asp139. Mg(2+)-binding residues include Asp8, Glu67, and Asp139.

This sequence belongs to the RuvC family. As to quaternary structure, homodimer which binds Holliday junction (HJ) DNA. The HJ becomes 2-fold symmetrical on binding to RuvC with unstacked arms; it has a different conformation from HJ DNA in complex with RuvA. In the full resolvosome a probable DNA-RuvA(4)-RuvB(12)-RuvC(2) complex forms which resolves the HJ. Mg(2+) serves as cofactor.

The protein resides in the cytoplasm. It carries out the reaction Endonucleolytic cleavage at a junction such as a reciprocal single-stranded crossover between two homologous DNA duplexes (Holliday junction).. Functionally, the RuvA-RuvB-RuvC complex processes Holliday junction (HJ) DNA during genetic recombination and DNA repair. Endonuclease that resolves HJ intermediates. Cleaves cruciform DNA by making single-stranded nicks across the HJ at symmetrical positions within the homologous arms, yielding a 5'-phosphate and a 3'-hydroxyl group; requires a central core of homology in the junction. The consensus cleavage sequence is 5'-(A/T)TT(C/G)-3'. Cleavage occurs on the 3'-side of the TT dinucleotide at the point of strand exchange. HJ branch migration catalyzed by RuvA-RuvB allows RuvC to scan DNA until it finds its consensus sequence, where it cleaves and resolves the cruciform DNA. This is Crossover junction endodeoxyribonuclease RuvC from Pseudoalteromonas translucida (strain TAC 125).